Here is a 38-residue protein sequence, read N- to C-terminus: Photosystem I reaction center subunit VIII (38 aa).

A helical membrane pass occupies residues 12 to 32 (WILIPIIGWLMPAVVMGLLFL).

Belongs to the PsaI family.

Its subcellular location is the cellular thylakoid membrane. In terms of biological role, may help in the organization of the PsaL subunit. In Gloeothece citriformis (strain PCC 7424) (Cyanothece sp. (strain PCC 7424)), this protein is Photosystem I reaction center subunit VIII.